A 342-amino-acid chain; its full sequence is UDP-N-acetylglucosamine--N-acetylmuramyl-(pentapeptide) pyrophosphoryl-undecaprenol N-acetylglucosamine transferase (342 aa).

Residues threonine 10–glycine 12, asparagine 124, serine 177, and glutamine 275 each bind UDP-N-acetyl-alpha-D-glucosamine.

The protein belongs to the glycosyltransferase 28 family. MurG subfamily.

Its subcellular location is the cell inner membrane. It catalyses the reaction di-trans,octa-cis-undecaprenyl diphospho-N-acetyl-alpha-D-muramoyl-L-alanyl-D-glutamyl-meso-2,6-diaminopimeloyl-D-alanyl-D-alanine + UDP-N-acetyl-alpha-D-glucosamine = di-trans,octa-cis-undecaprenyl diphospho-[N-acetyl-alpha-D-glucosaminyl-(1-&gt;4)]-N-acetyl-alpha-D-muramoyl-L-alanyl-D-glutamyl-meso-2,6-diaminopimeloyl-D-alanyl-D-alanine + UDP + H(+). It functions in the pathway cell wall biogenesis; peptidoglycan biosynthesis. Its function is as follows. Cell wall formation. Catalyzes the transfer of a GlcNAc subunit on undecaprenyl-pyrophosphoryl-MurNAc-pentapeptide (lipid intermediate I) to form undecaprenyl-pyrophosphoryl-MurNAc-(pentapeptide)GlcNAc (lipid intermediate II). The sequence is that of UDP-N-acetylglucosamine--N-acetylmuramyl-(pentapeptide) pyrophosphoryl-undecaprenol N-acetylglucosamine transferase from Campylobacter jejuni subsp. jejuni serotype O:6 (strain 81116 / NCTC 11828).